A 145-amino-acid polypeptide reads, in one-letter code: Leptin (145 aa).

Residues L1–A12 form the signal peptide.

It belongs to the leptin family.

The protein localises to the secreted. In terms of biological role, key player in the regulation of energy balance and body weight control. Once released into the circulation, has central and peripheral effects by binding LEPR, found in many tissues, which results in the activation of several major signaling pathways. In the hypothalamus, acts as an appetite-regulating factor that induces a decrease in food intake and an increase in energy consumption by inducing anorexinogenic factors and suppressing orexigenic neuropeptides, also regulates bone mass and secretion of hypothalamo-pituitary-adrenal hormones. In the periphery, increases basal metabolism, influences reproductive function, regulates pancreatic beta-cell function and insulin secretion, is pro-angiogenic for endothelial cell and affects innate and adaptive immunity. In the arcuate nucleus of the hypothalamus, activates by depolarization POMC neurons inducing FOS and SOCS3 expression to release anorexigenic peptides and inhibits by hyperpolarization NPY neurons inducing SOCS3 with a consequent reduction on release of orexigenic peptides. In addition to its known satiety inducing effect, has a modulatory role in nutrient absorption. In the intestine, reduces glucose absorption by enterocytes by activating PKC and leading to a sequential activation of p38, PI3K and ERK signaling pathways which exerts an inhibitory effect on glucose absorption. Acts as a growth factor on certain tissues, through the activation of different signaling pathways increases expression of genes involved in cell cycle regulation such as CCND1, via JAK2-STAT3 pathway, or VEGFA, via MAPK1/3 and PI3K-AKT1 pathways. May also play an apoptotic role via JAK2-STAT3 pathway and up-regulation of BIRC5 expression. Pro-angiogenic, has mitogenic activity on vascular endothelial cells and plays a role in matrix remodeling by regulating the expression of matrix metalloproteinases (MMPs) and tissue inhibitors of metalloproteinases (TIMPs). In innate immunity, modulates the activity and function of neutrophils by increasing chemotaxis and the secretion of oxygen radicals. Increases phagocytosis by macrophages and enhances secretion of pro-inflammatory mediators. Increases cytotoxic ability of NK cells. Plays a pro-inflammatory role, in synergy with IL1B, by inducing NOS2 which promotes the production of IL6, IL8 and Prostaglandin E2, through a signaling pathway that involves JAK2, PI3K, MAP2K1/MEK1 and MAPK14/p38. In adaptive immunity, promotes the switch of memory T-cells towards T helper-1 cell immune responses. Increases CD4(+)CD25(-) T-cell proliferation and reduces autophagy during TCR (T-cell receptor) stimulation, through MTOR signaling pathway activation and BCL2 up-regulation. The sequence is that of Leptin (LEP) from Equus caballus (Horse).